Here is a 243-residue protein sequence, read N- to C-terminus: Adenosylcobinamide-GDP ribazoletransferase (243 aa).

5 helical membrane-spanning segments follow: residues Leu31–Leu51, Ala61–Ala81, Ile109–Leu129, Gly134–Thr154, and Leu188–Leu208.

Belongs to the CobS family. It depends on Mg(2+) as a cofactor.

It is found in the cell inner membrane. The catalysed reaction is alpha-ribazole + adenosylcob(III)inamide-GDP = adenosylcob(III)alamin + GMP + H(+). It catalyses the reaction alpha-ribazole 5'-phosphate + adenosylcob(III)inamide-GDP = adenosylcob(III)alamin 5'-phosphate + GMP + H(+). The protein operates within cofactor biosynthesis; adenosylcobalamin biosynthesis; adenosylcobalamin from cob(II)yrinate a,c-diamide: step 7/7. Functionally, joins adenosylcobinamide-GDP and alpha-ribazole to generate adenosylcobalamin (Ado-cobalamin). Also synthesizes adenosylcobalamin 5'-phosphate from adenosylcobinamide-GDP and alpha-ribazole 5'-phosphate. This is Adenosylcobinamide-GDP ribazoletransferase from Ectopseudomonas mendocina (strain ymp) (Pseudomonas mendocina).